A 263-amino-acid chain; its full sequence is Diphthine synthase (263 aa).

S-adenosyl-L-methionine-binding positions include leucine 11, aspartate 89, alanine 92, 117-118, leucine 166, and leucine 208; that span reads SV.

The protein belongs to the diphthine synthase family. In terms of assembly, homodimer.

The enzyme catalyses 2-[(3S)-amino-3-carboxypropyl]-L-histidyl-[translation elongation factor 2] + 3 S-adenosyl-L-methionine = diphthine-[translation elongation factor 2] + 3 S-adenosyl-L-homocysteine + 3 H(+). The protein operates within protein modification; peptidyl-diphthamide biosynthesis. S-adenosyl-L-methionine-dependent methyltransferase that catalyzes the trimethylation of the amino group of the modified target histidine residue in translation elongation factor 2 (EF-2), to form an intermediate called diphthine. The three successive methylation reactions represent the second step of diphthamide biosynthesis. This is Diphthine synthase from Methanopyrus kandleri (strain AV19 / DSM 6324 / JCM 9639 / NBRC 100938).